We begin with the raw amino-acid sequence, 336 residues long: Serpentine receptor class alpha-10 (336 aa).

Residues 1-28 (MGPITANSSKCATEDQMILQTSLLLRIN) are Extracellular-facing. A helical transmembrane segment spans residues 29-49 (VIIMTIVAIITFILTYKALFI). Over 50 to 61 (LKIRPIFHSSTK) the chain is Cytoplasmic. A helical membrane pass occupies residues 62–82 (ILLYTSLLFVNVHAVIFMVIQ). Residues 83–107 (NTALIRSFTLSDKPCEIMRTTLECR) lie on the Extracellular side of the membrane. The helical transmembrane segment at 108-128 (FQNHVLIFGIAGVNFNQFGLT) threads the bilayer. At 129–148 (VDRLLATIIPQSYSHMGALP) the chain is on the cytoplasmic side. A helical membrane pass occupies residues 149–169 (GVILSVLVVACSIAAPLIIAI). Residues 170-192 (GDPYDDIVPNCFFFPEHSAPRAN) are Extracellular-facing. Residues 193–213 (IFLVTLSTLVITSIFLNFIII) traverse the membrane as a helical segment. Residues 214-243 (YANKKLEKGCRTRFYVTQRYQKREALISTR) are Cytoplasmic-facing. A helical transmembrane segment spans residues 244–264 (IISYIAASQFLGLTLYSTMVL). Residues 265-280 (TLRLHKSMIPISIYHN) are Extracellular-facing. The chain crosses the membrane as a helical span at residues 281–301 (MVWWAYTVPFAAVSLPALLIY). At 302-336 (RINQVGSNRKRVINRITAKVETQEEHMKSLKELWA) the chain is on the cytoplasmic side.

The protein belongs to the nematode receptor-like protein sra family. In terms of tissue distribution, expressed in the URX sensory neuron, the ALA interneuron and in additional interneurons, pharyngeal neurons and muscle.

Its subcellular location is the membrane. The polypeptide is Serpentine receptor class alpha-10 (sra-10) (Caenorhabditis elegans).